Consider the following 56-residue polypeptide: Small ribosomal subunit protein uS14 (56 aa).

The Zn(2+) site is built by C21, C24, C39, and C42.

It belongs to the universal ribosomal protein uS14 family. As to quaternary structure, component of the 40S small ribosomal subunit. Zn(2+) is required as a cofactor.

It localises to the cytoplasm. The protein resides in the cytosol. It is found in the rough endoplasmic reticulum. The protein is Small ribosomal subunit protein uS14 (RpS29) of Drosophila melanogaster (Fruit fly).